Here is a 499-residue protein sequence, read N- to C-terminus: Increased recombination centers protein 15 (499 aa).

Residue 47–56 coordinates FAD; the sequence is DQRASLGGAY.

This sequence belongs to the class-I pyridine nucleotide-disulfide oxidoreductase family.

It localises to the cytoplasm. The chain is Increased recombination centers protein 15 (IRC15) from Saccharomyces cerevisiae (strain ATCC 204508 / S288c) (Baker's yeast).